Reading from the N-terminus, the 262-residue chain is ATP synthase subunit a (262 aa).

A run of 5 helical transmembrane segments spans residues 24 to 44 (AVHL…LVVF), 85 to 105 (IAPL…IDLV), 129 to 149 (DISA…FYTV), 194 to 214 (LFGN…MYMA), and 228 to 248 (LVWA…FMML).

This sequence belongs to the ATPase A chain family. In terms of assembly, F-type ATPases have 2 components, CF(1) - the catalytic core - and CF(0) - the membrane proton channel. CF(1) has five subunits: alpha(3), beta(3), gamma(1), delta(1), epsilon(1). CF(0) has three main subunits: a(1), b(2) and c(9-12). The alpha and beta chains form an alternating ring which encloses part of the gamma chain. CF(1) is attached to CF(0) by a central stalk formed by the gamma and epsilon chains, while a peripheral stalk is formed by the delta and b chains.

The protein localises to the cell inner membrane. Its function is as follows. Key component of the proton channel; it plays a direct role in the translocation of protons across the membrane. The protein is ATP synthase subunit a of Haemophilus ducreyi (strain 35000HP / ATCC 700724).